A 323-amino-acid polypeptide reads, in one-letter code: tRNA dimethylallyltransferase (323 aa).

Residue G12–T19 coordinates ATP. Residue T14–T19 coordinates substrate. 2 interaction with substrate tRNA regions span residues D37–L40 and Q161–R165.

It belongs to the IPP transferase family. In terms of assembly, monomer. Requires Mg(2+) as cofactor.

It catalyses the reaction adenosine(37) in tRNA + dimethylallyl diphosphate = N(6)-dimethylallyladenosine(37) in tRNA + diphosphate. Catalyzes the transfer of a dimethylallyl group onto the adenine at position 37 in tRNAs that read codons beginning with uridine, leading to the formation of N6-(dimethylallyl)adenosine (i(6)A). The sequence is that of tRNA dimethylallyltransferase from Pseudomonas putida (strain ATCC 700007 / DSM 6899 / JCM 31910 / BCRC 17059 / LMG 24140 / F1).